Consider the following 529-residue polypeptide: Calcium-dependent protein kinase 3 (529 aa).

A disordered region spans residues methionine 1–glutamate 73. A lipid anchor (N-myristoyl glycine) is attached at glycine 2. Residues serine 39–glycine 53 show a composition bias toward gly residues. The Protein kinase domain maps to tyrosine 78–isoleucine 336. ATP is bound by residues leucine 84–threonine 92 and lysine 107. The Proton acceptor role is filled by aspartate 202. Residue serine 242 is modified to Phosphoserine. An autoinhibitory domain region spans residues alanine 342–isoleucine 372. 4 consecutive EF-hand domains span residues glutamate 379–lysine 414, isoleucine 415–isoleucine 450, glutamate 451–methionine 485, and glycine 486–glutamate 521. The Ca(2+) site is built by aspartate 392, aspartate 394, asparagine 396, glutamate 403, aspartate 428, aspartate 430, aspartate 432, serine 434, glutamate 439, aspartate 464, aspartate 466, serine 468, tyrosine 470, glutamate 475, aspartate 499, aspartate 501, aspartate 503, lysine 505, and glutamate 510.

This sequence belongs to the protein kinase superfamily. Ser/Thr protein kinase family. CDPK subfamily. As to quaternary structure, interacts with GHR1. Expressed in both guard cells and mesophyll cells.

The protein localises to the cytoplasm. It localises to the nucleus. It catalyses the reaction L-seryl-[protein] + ATP = O-phospho-L-seryl-[protein] + ADP + H(+). It carries out the reaction L-threonyl-[protein] + ATP = O-phospho-L-threonyl-[protein] + ADP + H(+). Activated by calcium. Autophosphorylation may play an important role in the regulation of the kinase activity. Functionally, may play a role in signal transduction pathways that involve calcium as a second messenger. Functions in abscisic acid (ABA) regulation of guard cell S-type anion- and Ca(2+)-permeable channels and stomatal closure. In Arabidopsis thaliana (Mouse-ear cress), this protein is Calcium-dependent protein kinase 3.